Consider the following 213-residue polypeptide: LexA repressor 2 (213 aa).

Residues 27-47 constitute a DNA-binding region (H-T-H motif); that stretch reads QTEIARAFGFKGVRAAQYHLE. Residues Ser-133 and Lys-170 each act as for autocatalytic cleavage activity in the active site.

The protein belongs to the peptidase S24 family. As to quaternary structure, homodimer.

The enzyme catalyses Hydrolysis of Ala-|-Gly bond in repressor LexA.. Functionally, represses a number of genes involved in the response to DNA damage (SOS response), including recA and lexA. In the presence of single-stranded DNA, RecA interacts with LexA causing an autocatalytic cleavage which disrupts the DNA-binding part of LexA, leading to derepression of the SOS regulon and eventually DNA repair. This chain is LexA repressor 2, found in Xanthomonas campestris pv. campestris (strain ATCC 33913 / DSM 3586 / NCPPB 528 / LMG 568 / P 25).